The primary structure comprises 479 residues: MIDDFRFGRITVIGDLLLDQYISGGVSRISPEAPVPVVLHDGLRCVPGGAANVAVNAAALGAQVHLVGLVGEDDSAARLKETLKLWPTIETDGIVSSPDWTTITKTRVVSGRQQIVRIDVEKLTPLSETLQQRLVEEACRAIAVSDVLVCSDYAKGVLTDEVLRAIIAAGREKGIPVIVDPKRHTFEAYAGATLVTPNRIEAQQASGLPARTDGEVLKVAETLSGQFGGNVLVTRSEDGMTLWQHDAKPLHVASRKSEVFDVSGAGDTVVATVAAVLSAGQTLETAVVIATAAAALSVSKFGTATVSREELSRELLQEMPETGALVPVEQAARIVESWHRHGAKVVFTNGCFDLVHPGHVSLLQAAAREGDRLVVALNTDRSVSRLKGPTRPVQKEEARARVIGALRSVDLVVLFDEDTPLEVIRTLKPDILVKGADYTEDQVVGADVVKSYGGKVVLVDLVEGQSTTRLVRGMQSAPS.

Positions 1 to 322 (MIDDFRFGRI…RELLQEMPET (322 aa)) are ribokinase. 198–201 (NRIE) contributes to the ATP binding site. Residue Asp267 is part of the active site. The tract at residues 347-479 (FTNGCFDLVH…LVRGMQSAPS (133 aa)) is cytidylyltransferase.

In the N-terminal section; belongs to the carbohydrate kinase PfkB family. The protein in the C-terminal section; belongs to the cytidylyltransferase family. Homodimer.

It catalyses the reaction D-glycero-beta-D-manno-heptose 7-phosphate + ATP = D-glycero-beta-D-manno-heptose 1,7-bisphosphate + ADP + H(+). The enzyme catalyses D-glycero-beta-D-manno-heptose 1-phosphate + ATP + H(+) = ADP-D-glycero-beta-D-manno-heptose + diphosphate. Its pathway is nucleotide-sugar biosynthesis; ADP-L-glycero-beta-D-manno-heptose biosynthesis; ADP-L-glycero-beta-D-manno-heptose from D-glycero-beta-D-manno-heptose 7-phosphate: step 1/4. It functions in the pathway nucleotide-sugar biosynthesis; ADP-L-glycero-beta-D-manno-heptose biosynthesis; ADP-L-glycero-beta-D-manno-heptose from D-glycero-beta-D-manno-heptose 7-phosphate: step 3/4. Catalyzes the phosphorylation of D-glycero-D-manno-heptose 7-phosphate at the C-1 position to selectively form D-glycero-beta-D-manno-heptose-1,7-bisphosphate. In terms of biological role, catalyzes the ADP transfer from ATP to D-glycero-beta-D-manno-heptose 1-phosphate, yielding ADP-D-glycero-beta-D-manno-heptose. This chain is Bifunctional protein HldE, found in Gluconobacter oxydans (strain 621H) (Gluconobacter suboxydans).